The chain runs to 396 residues: Enoyl-[acyl-carrier-protein] reductase [NADH] (396 aa).

NAD(+) is bound by residues glycine 48 to tyrosine 53, phenylalanine 74 to glutamate 75, aspartate 111 to alanine 112, and leucine 139 to alanine 140. Tyrosine 225 contributes to the substrate binding site. The active-site Proton donor is the tyrosine 235. NAD(+) is bound by residues lysine 244 and valine 273–threonine 275.

It belongs to the TER reductase family. Monomer.

It catalyses the reaction a 2,3-saturated acyl-[ACP] + NAD(+) = a (2E)-enoyl-[ACP] + NADH + H(+). It participates in lipid metabolism; fatty acid biosynthesis. Its function is as follows. Involved in the final reduction of the elongation cycle of fatty acid synthesis (FAS II). Catalyzes the reduction of a carbon-carbon double bond in an enoyl moiety that is covalently linked to an acyl carrier protein (ACP). The polypeptide is Enoyl-[acyl-carrier-protein] reductase [NADH] (Colwellia psychrerythraea (strain 34H / ATCC BAA-681) (Vibrio psychroerythus)).